The sequence spans 138 residues: Large ribosomal subunit protein uL16 (138 aa).

The protein belongs to the universal ribosomal protein uL16 family. Part of the 50S ribosomal subunit.

In terms of biological role, binds 23S rRNA and is also seen to make contacts with the A and possibly P site tRNAs. The sequence is that of Large ribosomal subunit protein uL16 from Neisseria gonorrhoeae (strain ATCC 700825 / FA 1090).